The sequence spans 488 residues: Tyrosine-protein kinase Srms (488 aa).

The SH3 domain occupies 51–112; it reads PFPQLFLALY…PITHVAKASP (62 aa). An SH2 domain is found at 120 to 212; the sequence is WYFSGVSRTQ…LIQNPLLQPC (93 aa). Residues 230 to 488 enclose the Protein kinase domain; the sequence is FALGRKLGEG…KLHAIHRCHP (259 aa). ATP-binding positions include 236–244 and K258; that span reads LGEGYFGEV. D350 serves as the catalytic Proton acceptor. Phosphotyrosine; by autocatalysis is present on Y380.

The protein belongs to the protein kinase superfamily. Tyr protein kinase family. SRC subfamily. As to quaternary structure, interacts (via the SH2 and SH3 domains) with DOK1. Interacts with KHDRBS1/SAM68 and VIM. As to expression, highly expressed in most breast cancers (at protein level).

The protein resides in the cytoplasm. The catalysed reaction is L-tyrosyl-[protein] + ATP = O-phospho-L-tyrosyl-[protein] + ADP + H(+). Its function is as follows. Non-receptor tyrosine-protein kinase which phosphorylates DOK1 on tyrosine residues. Also phosphorylates KHDRBS1/SAM68 and VIM on tyrosine residues. Phosphorylation of KHDRBS1 is EGF-dependent. Phosphorylates OTUB1, promoting deubiquitination of RPTOR. This Homo sapiens (Human) protein is Tyrosine-protein kinase Srms (SRMS).